The following is a 314-amino-acid chain: Homoserine O-acetyltransferase (314 aa).

Catalysis depends on Cys142, which acts as the Acyl-thioester intermediate. Lys163 and Ser192 together coordinate substrate. The active-site Proton acceptor is the His235. The active site involves Glu237. Arg249 serves as a coordination point for substrate.

Belongs to the MetA family.

Its subcellular location is the cytoplasm. The catalysed reaction is L-homoserine + acetyl-CoA = O-acetyl-L-homoserine + CoA. It functions in the pathway amino-acid biosynthesis; L-methionine biosynthesis via de novo pathway; O-acetyl-L-homoserine from L-homoserine: step 1/1. Functionally, transfers an acetyl group from acetyl-CoA to L-homoserine, forming acetyl-L-homoserine. This is Homoserine O-acetyltransferase from Azobacteroides pseudotrichonymphae genomovar. CFP2.